Reading from the N-terminus, the 128-residue chain is Large ribosomal subunit protein bL12 (128 aa).

It belongs to the bacterial ribosomal protein bL12 family. In terms of assembly, homodimer. Part of the ribosomal stalk of the 50S ribosomal subunit. Forms a multimeric L10(L12)X complex, where L10 forms an elongated spine to which 2 to 4 L12 dimers bind in a sequential fashion. Binds GTP-bound translation factors.

Forms part of the ribosomal stalk which helps the ribosome interact with GTP-bound translation factors. Is thus essential for accurate translation. This Halorhodospira halophila (strain DSM 244 / SL1) (Ectothiorhodospira halophila (strain DSM 244 / SL1)) protein is Large ribosomal subunit protein bL12.